Consider the following 151-residue polypeptide: Large ribosomal subunit protein bL9 (151 aa).

It belongs to the bacterial ribosomal protein bL9 family.

Binds to the 23S rRNA. The protein is Large ribosomal subunit protein bL9 of Lactobacillus acidophilus (strain ATCC 700396 / NCK56 / N2 / NCFM).